Reading from the N-terminus, the 381-residue chain is Creatine kinase B-type (381 aa).

Ser4 is subject to Phosphoserine. The region spanning Lys11–Gly98 is the Phosphagen kinase N-terminal domain. At Thr35 the chain carries Phosphothreonine. Residue Lys45 forms a Glycyl lysine isopeptide (Lys-Gly) (interchain with G-Cter in ubiquitin) linkage. Val72 serves as a coordination point for creatine. The segment covering Arg96–Leu110 has biased composition (basic and acidic residues). The segment at Arg96–Pro123 is disordered. Lys107 participates in a covalent cross-link: Glycyl lysine isopeptide (Lys-Gly) (interchain with G-Cter in ubiquitin). Phosphotyrosine is present on Tyr125. In terms of domain architecture, Phosphagen kinase C-terminal spans Tyr125–Leu367. ATP contacts are provided by residues Ser128 to Arg132, Arg130, Arg132, and His191. Residues Arg130–Arg138 form an internal MTS-like signal region. Ser199 is modified (phosphoserine). Glu232 contacts creatine. Arg236 contributes to the ATP binding site. 3'-nitrotyrosine is present on Tyr269. Residue Ser285 coordinates creatine. Residue Arg292 coordinates ATP. Ser309 bears the Phosphoserine mark. Residues Arg320, Arg320–Val325, and Asp335 each bind ATP. Thr322 is modified (phosphothreonine). Lys381 is covalently cross-linked (Glycyl lysine isopeptide (Lys-Gly) (interchain with G-Cter in ubiquitin)).

Belongs to the ATP:guanido phosphotransferase family. In terms of assembly, dimer of identical or non-identical chains, which can be either B (brain type) or M (muscle type). With MM being the major form in skeletal muscle and myocardium, MB existing in myocardium, and BB existing in many tissues, especially brain. Interacts with SLC12A6 (via C-terminus); the interaction may be required for SLC12A6 potassium-chloride cotransport activity. In terms of processing, ubiquitinated by the ECS(ASB9) complex, leading to its degradation by the proteasome. In terms of tissue distribution, expressed in hippocampus and corpus callosum (at protein level).

Its subcellular location is the cytoplasm. It localises to the cytosol. It is found in the mitochondrion. The protein localises to the cell membrane. The enzyme catalyses creatine + ATP = N-phosphocreatine + ADP + H(+). Its function is as follows. Reversibly catalyzes the transfer of phosphate between ATP and various phosphogens (e.g. creatine phosphate). Creatine kinase isoenzymes play a central role in energy transduction in tissues with large, fluctuating energy demands, such as skeletal muscle, heart, brain and spermatozoa. Acts as a key regulator of adaptive thermogenesis as part of the futile creatine cycle: localizes to the mitochondria of thermogenic fat cells and acts by mediating phosphorylation of creatine to initiate a futile cycle of creatine phosphorylation and dephosphorylation. During the futile creatine cycle, creatine and N-phosphocreatine are in a futile cycle, which dissipates the high energy charge of N-phosphocreatine as heat without performing any mechanical or chemical work. In Mus musculus (Mouse), this protein is Creatine kinase B-type.